Reading from the N-terminus, the 405-residue chain is Protein NCA1 (405 aa).

Positions 1 to 85 (MTTTSVCPFS…GNLNKDSTDS (85 aa)) are disordered. Basic and acidic residues-rich tracts occupy residues 13 to 24 (ARPDDGSTRKQG) and 37 to 48 (ARPDDASARKQG). Polar residues predominate over residues 76 to 85 (GNLNKDSTDS). Residues 108-142 (CMLCQALLYESSRCVPCTHVFCKVCLTRFKDCPLC) form an RING-type zinc finger. 2 TPR repeats span residues 247 to 280 (GAVL…LMKL) and 292 to 325 (SVSL…RRDA).

Interacts with the catalases CAT1, CAT2 and CAT3. This interaction is not induced by alkaline stress or H(2)O(2) and NaCl treatments. As to expression, expressed in roots, stems, leaves, flowers and siliques.

The protein resides in the cytoplasm. It is found in the nucleus. Functionally, has holdase chaperone activity that may fold catalase to a functional structure. Not required for the peroxisome import of catalases. Required for the activity of catalases and acts mainly at the post-transcriptional level. In Arabidopsis thaliana (Mouse-ear cress), this protein is Protein NCA1.